The following is a 430-amino-acid chain: Putrescine 2-hydroxylase (430 aa).

Residues 88–203 (LYVGHQKLVP…LRDCHGLLFE (116 aa)) enclose the Rieske domain. Residues Cys128, His130, Cys162, and His165 each coordinate [2Fe-2S] cluster.

The protein belongs to the bacterial ring-hydroxylating dioxygenase alpha subunit family. The cofactor is [2Fe-2S] cluster.

Rieske-type iron sulfur protein that can catalyze in vitro the 2-hydroxylation of putrescine, forming 2-hydroxyputrescine. May be involved in the biosynthesis of the cyclic hydroxamate siderophore alcaligin. The sequence is that of Putrescine 2-hydroxylase from Bordetella bronchiseptica (strain ATCC BAA-588 / NCTC 13252 / RB50) (Alcaligenes bronchisepticus).